The following is a 660-amino-acid chain: tRNA 5-methylaminomethyl-2-thiouridine biosynthesis bifunctional protein MnmC (660 aa).

The interval 1–241 (MNDHPAQDAF…KREILRGHLQ (241 aa)) is tRNA (mnm(5)s(2)U34)-methyltransferase. The segment at 268 to 660 (IGAGLAGCAT…FLLRKLIRGT (393 aa)) is FAD-dependent cmnm(5)s(2)U34 oxidoreductase.

In the N-terminal section; belongs to the methyltransferase superfamily. tRNA (mnm(5)s(2)U34)-methyltransferase family. This sequence in the C-terminal section; belongs to the DAO family. Requires FAD as cofactor.

It is found in the cytoplasm. It catalyses the reaction 5-aminomethyl-2-thiouridine(34) in tRNA + S-adenosyl-L-methionine = 5-methylaminomethyl-2-thiouridine(34) in tRNA + S-adenosyl-L-homocysteine + H(+). Functionally, catalyzes the last two steps in the biosynthesis of 5-methylaminomethyl-2-thiouridine (mnm(5)s(2)U) at the wobble position (U34) in tRNA. Catalyzes the FAD-dependent demodification of cmnm(5)s(2)U34 to nm(5)s(2)U34, followed by the transfer of a methyl group from S-adenosyl-L-methionine to nm(5)s(2)U34, to form mnm(5)s(2)U34. In Stutzerimonas stutzeri (strain A1501) (Pseudomonas stutzeri), this protein is tRNA 5-methylaminomethyl-2-thiouridine biosynthesis bifunctional protein MnmC.